The following is a 580-amino-acid chain: Probable RNA-binding protein CG14230 (580 aa).

One can recognise an RRM domain in the interval 4-81; sequence TRFFLADLPT…EKLRVSLAKE (78 aa). Over residues 89–100 the composition is skewed to basic and acidic residues; the sequence is REREENQRREQG. 2 disordered regions span residues 89–131 and 173–211; these read RERE…EDEE and QHRK…KSAI. Residues 110–120 show a composition bias toward polar residues; sequence PSSQLLVQSGQ. Ser-231 is subject to Phosphoserine. Acidic residues-rich tracts occupy residues 254–263 and 298–313; these read ENDDDEEEEQ and NEEE…EPEE. Disordered stretches follow at residues 254 to 316, 333 to 395, and 463 to 520; these read ENDD…ESER, SAND…SAVS, and PFSY…IPRN. Basic and acidic residues-rich tracts occupy residues 348–358 and 365–377; these read LRFDPAKEGHQ and QPKE…EETS. Polar residues predominate over residues 386-395; it reads AGNSQASAVS. Residue Ser-468 is modified to Phosphoserine. Thr-475 is subject to Phosphothreonine.

This Drosophila melanogaster (Fruit fly) protein is Probable RNA-binding protein CG14230.